The sequence spans 173 residues: Shikimate kinase 1 (173 aa).

An ATP-binding site is contributed by 14-19 (GAGKST). Ser-18 is a binding site for Mg(2+). Residues Asp-36, Arg-60, and Gly-82 each contribute to the substrate site. Arg-120 is an ATP binding site. Arg-140 is a binding site for substrate. ATP is bound at residue Gln-157.

Belongs to the shikimate kinase family. As to quaternary structure, monomer. The cofactor is Mg(2+).

It is found in the cytoplasm. The enzyme catalyses shikimate + ATP = 3-phosphoshikimate + ADP + H(+). Its pathway is metabolic intermediate biosynthesis; chorismate biosynthesis; chorismate from D-erythrose 4-phosphate and phosphoenolpyruvate: step 5/7. Catalyzes the specific phosphorylation of the 3-hydroxyl group of shikimic acid using ATP as a cosubstrate. The polypeptide is Shikimate kinase 1 (Enterobacter sp. (strain 638)).